The chain runs to 245 residues: RNA polymerase sigma factor SigI5 (245 aa).

The Polymerase core binding motif lies at 60-73; the sequence is DEYSIGLMAFNEAI. Positions 202–221 form a DNA-binding region, H-T-H motif; sequence MKELSKIIDVHPKTVERNRA.

It belongs to the sigma-70 factor family. SigI subfamily. Interacts with RsgI5.

The protein localises to the cytoplasm. Its activity is regulated as follows. Negatively regulated by the anti-sigma-I factor RsgI5. Binding of the polysaccharide substrate to RsgI5 may lead to the release and activation of SigI5. In terms of biological role, sigma factors are initiation factors that promote the attachment of RNA polymerase to specific initiation sites and are then released. This sigma factor is involved in regulation of cellulosomal genes via an external polysaccharide-sensing mechanism. The sequence is that of RNA polymerase sigma factor SigI5 from Acetivibrio thermocellus (strain ATCC 27405 / DSM 1237 / JCM 9322 / NBRC 103400 / NCIMB 10682 / NRRL B-4536 / VPI 7372) (Clostridium thermocellum).